A 129-amino-acid chain; its full sequence is Thioredoxin-like 3-3 (129 aa).

The span at 1–10 shows a compositional bias: basic and acidic residues; sequence MEEGEAKKTG. The interval 1-30 is disordered; that stretch reads MEEGEAKKTGLEGTGLSLPGSSHGNLRSAG. The 123-residue stretch at 7-129 folds into the Thioredoxin domain; it reads KKTGLEGTGL…RLHDRLWLHS (123 aa). The span at 19 to 30 shows a compositional bias: polar residues; the sequence is PGSSHGNLRSAG. Residues Cys-58 and Cys-61 each act as nucleophile in the active site. A disulfide bond links Cys-58 and Cys-61.

Belongs to the thioredoxin family.

In terms of biological role, probable thiol-disulfide oxidoreductase that may participate in various redox reactions. The protein is Thioredoxin-like 3-3 of Oryza sativa subsp. japonica (Rice).